The following is a 466-amino-acid chain: Prophage integrase IntF (466 aa).

A Core-binding (CB) domain is found at 134–239; that stretch reads KTKVTFSVAW…LLRAFIKWSN (106 aa). The 178-residue stretch at 268-445 folds into the Tyr recombinase domain; that stretch reads KADDCLQKEQ…PLDLLRKWHE (178 aa). Catalysis depends on residues R306, K328, H396, R399, and H422. Residue Y432 is the O-(3'-phospho-DNA)-tyrosine intermediate of the active site.

Belongs to the 'phage' integrase family.

Functionally, integrase is necessary for integration of the phage into the host genome by site-specific recombination. In conjunction with excisionase, integrase is also necessary for excision of the prophage from the host genome. The chain is Prophage integrase IntF (intF) from Escherichia coli (strain K12).